The primary structure comprises 881 residues: Putative leucine-rich repeat receptor-like protein kinase At2g19210 (881 aa).

An N-terminal signal peptide occupies residues 1–25 (MVHYNFLSLIIFACFFAVFVLLVRA). Residues 26–518 (QDQSGFVSID…SDEKTKKNVY (493 aa)) are Extracellular-facing. N-linked (GlcNAc...) asparagine glycosylation is found at N143, N234, N295, N310, N404, N419, N435, N446, and N462. 2 LRR repeats span residues 438–460 (LLHILDLSNNSLTGKIPDFLGNL) and 462–483 (NLTELNLEGNKLSGAIPVKLLE). Residues 519 to 539 (IIPLVASVVGVLGLVLAIALF) form a helical membrane-spanning segment. Residues 540 to 881 (LLYKKRHRRG…FDSGMFPQAR (342 aa)) lie on the Cytoplasmic side of the membrane. Residues 576-850 (NNFERVLGQG…HVVAELKESV (275 aa)) form the Protein kinase domain. Residues 582–590 (LGQGGFGKV) and K603 each bind ATP. Position 648 is a phosphotyrosine (Y648). The active-site Proton acceptor is D699. Phosphothreonine is present on residues T734 and T739. At Y747 the chain carries Phosphotyrosine. Residues 851–881 (SRARAGGGSGASSVTDPAMTNFDSGMFPQAR) are disordered.

It belongs to the protein kinase superfamily. Ser/Thr protein kinase family.

The protein resides in the cell membrane. The catalysed reaction is L-seryl-[protein] + ATP = O-phospho-L-seryl-[protein] + ADP + H(+). It carries out the reaction L-threonyl-[protein] + ATP = O-phospho-L-threonyl-[protein] + ADP + H(+). This is Putative leucine-rich repeat receptor-like protein kinase At2g19210 from Arabidopsis thaliana (Mouse-ear cress).